Reading from the N-terminus, the 189-residue chain is MAPAWSLLLALLLLSCNAICSLGCHLPHIHSLANRRVLMLLQQLRRVSPSSCLQDRNDFALPQEALGGSQLQKAQAISVLHEVTQHTSQLFSTEGFGAVWDESLLDKLRAALDQQLTDLQACLRQEEGLRGAPLVKKDSSLAVRKYFHRLTLYLQEKRHSPCAWEVVRAEVMRAFSSSTNLQESFRRKD.

An N-terminal signal peptide occupies residues 1-23 (MAPAWSLLLALLLLSCNAICSLG). Disulfide bonds link cysteine 24-cysteine 122 and cysteine 52-cysteine 162.

This sequence belongs to the alpha/beta interferon family.

It is found in the secreted. Produced by macrophages, IFN-alpha have antiviral activities. Interferon stimulates the production of two enzymes: a protein kinase and an oligoadenylate synthetase. The polypeptide is Interferon alpha-F (IFNAF) (Bos taurus (Bovine)).